The sequence spans 301 residues: Probable alpha-L-glutamate ligase 1 (301 aa).

Positions 104–287 (LQLLSRKNIG…VAEKIIQFIE (184 aa)) constitute an ATP-grasp domain. ATP contacts are provided by residues K141, 178-179 (EY), D187, and 211-213 (RSN). Mg(2+) contacts are provided by D248, E260, and N262. Positions 248, 260, and 262 each coordinate Mn(2+).

It belongs to the RimK family. Mg(2+) is required as a cofactor. Mn(2+) serves as cofactor.

The chain is Probable alpha-L-glutamate ligase 1 from Shewanella frigidimarina (strain NCIMB 400).